A 288-amino-acid chain; its full sequence is 33 kDa chaperonin (288 aa).

Intrachain disulfides connect C237–C239 and C270–C273.

Belongs to the HSP33 family. Post-translationally, under oxidizing conditions two disulfide bonds are formed involving the reactive cysteines. Under reducing conditions zinc is bound to the reactive cysteines and the protein is inactive.

The protein localises to the cytoplasm. Its function is as follows. Redox regulated molecular chaperone. Protects both thermally unfolding and oxidatively damaged proteins from irreversible aggregation. Plays an important role in the bacterial defense system toward oxidative stress. The polypeptide is 33 kDa chaperonin (Agathobacter rectalis (strain ATCC 33656 / DSM 3377 / JCM 17463 / KCTC 5835 / VPI 0990) (Eubacterium rectale)).